Here is a 517-residue protein sequence, read N- to C-terminus: Fatty acyl-CoA reductase wat (517 aa).

Helical transmembrane passes span 378–398 and 492–512; these read ILCF…MVII and VLHY…LYAL.

Belongs to the fatty acyl-CoA reductase family.

It localises to the apical cell membrane. The enzyme catalyses a long-chain fatty acyl-CoA + 2 NADPH + 2 H(+) = a long-chain primary fatty alcohol + 2 NADP(+) + CoA. Functionally, catalyzes the reduction of saturated fatty acyl-CoA to fatty alcohols. The preferred substrates are C24:0 and C26:0. Necessary for the final stages of tracheal maturation, to facilitate the transition from water-filled to gas-filled tubes. May help to maintain the integrity of the outer hydrophobic envelope of the trachea. This Drosophila melanogaster (Fruit fly) protein is Fatty acyl-CoA reductase wat.